We begin with the raw amino-acid sequence, 398 residues long: Nicotinate phosphoribosyltransferase (398 aa).

The residue at position 221 (H221) is a Phosphohistidine; by autocatalysis.

This sequence belongs to the NAPRTase family. Transiently phosphorylated on a His residue during the reaction cycle. Phosphorylation strongly increases the affinity for substrates and increases the rate of nicotinate D-ribonucleotide production. Dephosphorylation regenerates the low-affinity form of the enzyme, leading to product release.

It carries out the reaction nicotinate + 5-phospho-alpha-D-ribose 1-diphosphate + ATP + H2O = nicotinate beta-D-ribonucleotide + ADP + phosphate + diphosphate. It functions in the pathway cofactor biosynthesis; NAD(+) biosynthesis; nicotinate D-ribonucleotide from nicotinate: step 1/1. Functionally, catalyzes the synthesis of beta-nicotinate D-ribonucleotide from nicotinate and 5-phospho-D-ribose 1-phosphate at the expense of ATP. This chain is Nicotinate phosphoribosyltransferase, found in Buchnera aphidicola subsp. Schizaphis graminum (strain Sg).